The chain runs to 407 residues: Arginine biosynthesis bifunctional protein ArgJ (407 aa).

Positions 169, 192, 203, 283, 402, and 407 each coordinate substrate. The active-site Nucleophile is the Thr203.

The protein belongs to the ArgJ family. Heterotetramer of two alpha and two beta chains.

The protein localises to the cytoplasm. It carries out the reaction N(2)-acetyl-L-ornithine + L-glutamate = N-acetyl-L-glutamate + L-ornithine. It catalyses the reaction L-glutamate + acetyl-CoA = N-acetyl-L-glutamate + CoA + H(+). Its pathway is amino-acid biosynthesis; L-arginine biosynthesis; L-ornithine and N-acetyl-L-glutamate from L-glutamate and N(2)-acetyl-L-ornithine (cyclic): step 1/1. The protein operates within amino-acid biosynthesis; L-arginine biosynthesis; N(2)-acetyl-L-ornithine from L-glutamate: step 1/4. In terms of biological role, catalyzes two activities which are involved in the cyclic version of arginine biosynthesis: the synthesis of N-acetylglutamate from glutamate and acetyl-CoA as the acetyl donor, and of ornithine by transacetylation between N(2)-acetylornithine and glutamate. The polypeptide is Arginine biosynthesis bifunctional protein ArgJ (Mycobacterium leprae (strain TN)).